The following is a 1040-amino-acid chain: Chromatin modification-related protein rik1 (1040 aa).

Belongs to the DDB1 family. In terms of assembly, component of the Clr4 methyltransferase complex (ClrC) composed of at least clr4, rik1, pcu4, rbx1, raf1 and raf2. The cullin pcu4, rik1, raf1, raf2 and the ring-box protein rbx1 are components of an E3 ubiquitin ligase, whose activity is essential for heterochromatin assembly.

It is found in the nucleus. The protein localises to the cytoplasm. It localises to the cytoskeleton. The protein resides in the microtubule organizing center. Its subcellular location is the spindle pole body. It is found in the chromosome. Component of the Clr4 methyltransferase complex (ClrC) which contributes to the establishment of heterochromatin by specifically methylating histone H3 to form H3K9me. ClrC preferentially ubiquitylates H3K14 and ClrC-mediated H3 ubiquitination promotes clr4 methyltransferase activity for the methylation of H3K9. H3K9me represents a specific tag for epigenetic transcriptional repression by recruiting swi6/HP1 to methylated histones which leads to transcriptional silencing within centromeric heterochromatin, telomeric regions and at the silent mating-type loci. Rik1 is involved in the RNAi-mediated targeting of ClrC to heterochromatic repeat elements. Rik1 also has a function in meiotic telomere clustering. The polypeptide is Chromatin modification-related protein rik1 (rik1) (Schizosaccharomyces pombe (strain 972 / ATCC 24843) (Fission yeast)).